We begin with the raw amino-acid sequence, 597 residues long: Aspartate--tRNA(Asp/Asn) ligase (597 aa).

L-aspartate is bound at residue glutamate 175. The tract at residues 199-202 is aspartate; it reads QQYK. 2 residues coordinate L-aspartate: arginine 221 and histidine 454. ATP is bound at residue 221–223; it reads RDE. Glutamate 488 lines the ATP pocket. Residue arginine 495 coordinates L-aspartate. 540–543 lines the ATP pocket; that stretch reads GVDR.

This sequence belongs to the class-II aminoacyl-tRNA synthetase family. Type 1 subfamily. Homodimer.

The protein localises to the cytoplasm. It carries out the reaction tRNA(Asx) + L-aspartate + ATP = L-aspartyl-tRNA(Asx) + AMP + diphosphate. In terms of biological role, aspartyl-tRNA synthetase with relaxed tRNA specificity since it is able to aspartylate not only its cognate tRNA(Asp) but also tRNA(Asn). Reaction proceeds in two steps: L-aspartate is first activated by ATP to form Asp-AMP and then transferred to the acceptor end of tRNA(Asp/Asn). This Bartonella quintana (strain Toulouse) (Rochalimaea quintana) protein is Aspartate--tRNA(Asp/Asn) ligase.